Reading from the N-terminus, the 740-residue chain is Elongation factor 2 (740 aa).

The tr-type G domain maps to 23–264 (AQIRNAGTLA…MIIEHVPPPN (242 aa)). GTP is bound by residues 32–39 (AHVDHGKT), 98–102 (DTPGH), and 152–155 (NKID). Diphthamide is present on His605.

The protein belongs to the TRAFAC class translation factor GTPase superfamily. Classic translation factor GTPase family. EF-G/EF-2 subfamily.

It localises to the cytoplasm. Catalyzes the GTP-dependent ribosomal translocation step during translation elongation. During this step, the ribosome changes from the pre-translocational (PRE) to the post-translocational (POST) state as the newly formed A-site-bound peptidyl-tRNA and P-site-bound deacylated tRNA move to the P and E sites, respectively. Catalyzes the coordinated movement of the two tRNA molecules, the mRNA and conformational changes in the ribosome. This Pyrobaculum islandicum (strain DSM 4184 / JCM 9189 / GEO3) protein is Elongation factor 2.